The primary structure comprises 73 residues: UPF0499 protein CHGG_06021 (73 aa).

The signal sequence occupies residues 1–20 (MKSSIHVVLFFLLSLVASMA). 3 disulfide bridges follow: C41–C55, C48–C60, and C54–C69.

The protein belongs to the UPF0499 family.

The protein localises to the secreted. This is UPF0499 protein CHGG_06021 from Chaetomium globosum (strain ATCC 6205 / CBS 148.51 / DSM 1962 / NBRC 6347 / NRRL 1970) (Soil fungus).